The primary structure comprises 214 residues: Pyridoxine/pyridoxamine 5'-phosphate oxidase (214 aa).

Residues 9–12 and lysine 67 each bind substrate; that span reads RKDY. FMN is bound by residues 62–67, 77–78, arginine 83, lysine 84, and glutamine 106; these read RMVLLK and FT. The substrate site is built by tyrosine 124, arginine 128, and serine 132. FMN contacts are provided by residues 141–142 and tryptophan 186; that span reads QS. 192–194 provides a ligand contact to substrate; the sequence is RLH. FMN is bound at residue arginine 196.

The protein belongs to the pyridoxamine 5'-phosphate oxidase family. As to quaternary structure, homodimer. FMN serves as cofactor.

It catalyses the reaction pyridoxamine 5'-phosphate + O2 + H2O = pyridoxal 5'-phosphate + H2O2 + NH4(+). It carries out the reaction pyridoxine 5'-phosphate + O2 = pyridoxal 5'-phosphate + H2O2. Its pathway is cofactor metabolism; pyridoxal 5'-phosphate salvage; pyridoxal 5'-phosphate from pyridoxamine 5'-phosphate: step 1/1. It functions in the pathway cofactor metabolism; pyridoxal 5'-phosphate salvage; pyridoxal 5'-phosphate from pyridoxine 5'-phosphate: step 1/1. Functionally, catalyzes the oxidation of either pyridoxine 5'-phosphate (PNP) or pyridoxamine 5'-phosphate (PMP) into pyridoxal 5'-phosphate (PLP). The sequence is that of Pyridoxine/pyridoxamine 5'-phosphate oxidase from Trichormus variabilis (strain ATCC 29413 / PCC 7937) (Anabaena variabilis).